Consider the following 292-residue polypeptide: Phosphatidylglycerol--prolipoprotein diacylglyceryl transferase (292 aa).

A run of 4 helical transmembrane segments spans residues 18–38, 67–87, 105–125, and 129–149; these read LFGA…GLLI, LLTW…VLFY, GGMS…AFCL, and ISIL…LFLG. A 1,2-diacyl-sn-glycero-3-phospho-(1'-sn-glycerol) is bound at residue arginine 150. 3 consecutive transmembrane segments (helical) span residues 193–213, 222–242, and 266–286; these read QLYE…ILIW, GAVT…VEFV, and GLTM…YFML.

This sequence belongs to the Lgt family.

The protein localises to the cell inner membrane. The enzyme catalyses L-cysteinyl-[prolipoprotein] + a 1,2-diacyl-sn-glycero-3-phospho-(1'-sn-glycerol) = an S-1,2-diacyl-sn-glyceryl-L-cysteinyl-[prolipoprotein] + sn-glycerol 1-phosphate + H(+). Its pathway is protein modification; lipoprotein biosynthesis (diacylglyceryl transfer). Catalyzes the transfer of the diacylglyceryl group from phosphatidylglycerol to the sulfhydryl group of the N-terminal cysteine of a prolipoprotein, the first step in the formation of mature lipoproteins. In Cereibacter sphaeroides (strain ATCC 17025 / ATH 2.4.3) (Rhodobacter sphaeroides), this protein is Phosphatidylglycerol--prolipoprotein diacylglyceryl transferase.